Consider the following 72-residue polypeptide: Small ribosomal subunit protein bS18 (72 aa).

Belongs to the bacterial ribosomal protein bS18 family. Part of the 30S ribosomal subunit. Forms a tight heterodimer with protein bS6.

In terms of biological role, binds as a heterodimer with protein bS6 to the central domain of the 16S rRNA, where it helps stabilize the platform of the 30S subunit. This Francisella tularensis subsp. novicida (strain U112) protein is Small ribosomal subunit protein bS18.